The following is a 96-amino-acid chain: Citrate lyase acyl carrier protein (96 aa).

The residue at position 14 (Ser-14) is an O-(phosphoribosyl dephospho-coenzyme A)serine.

This sequence belongs to the CitD family. Oligomer with a subunit composition of (alpha,beta,gamma)6.

It localises to the cytoplasm. Functionally, covalent carrier of the coenzyme of citrate lyase. The protein is Citrate lyase acyl carrier protein of Lactiplantibacillus plantarum (strain ATCC BAA-793 / NCIMB 8826 / WCFS1) (Lactobacillus plantarum).